Consider the following 186-residue polypeptide: UPF0301 protein CV_3909 (186 aa).

The protein belongs to the UPF0301 (AlgH) family.

The chain is UPF0301 protein CV_3909 from Chromobacterium violaceum (strain ATCC 12472 / DSM 30191 / JCM 1249 / CCUG 213 / NBRC 12614 / NCIMB 9131 / NCTC 9757 / MK).